The sequence spans 150 residues: Large ribosomal subunit protein bL9 (150 aa).

This sequence belongs to the bacterial ribosomal protein bL9 family.

Its function is as follows. Binds to the 23S rRNA. The sequence is that of Large ribosomal subunit protein bL9 from Buchnera aphidicola subsp. Acyrthosiphon pisum (strain 5A).